The sequence spans 178 residues: Large ribosomal subunit protein uL5 (178 aa).

Position 2 is an N-acetylalanine (A2). K38 is covalently cross-linked (Glycyl lysine isopeptide (Lys-Gly) (interchain with G-Cter in SUMO2)). Phosphothreonine is present on residues T44 and T47. At K52 the chain carries N6-acetyllysine; alternate. Residue K52 forms a Glycyl lysine isopeptide (Lys-Gly) (interchain with G-Cter in SUMO2); alternate linkage. K85 carries the N6-acetyllysine modification. K154 participates in a covalent cross-link: Glycyl lysine isopeptide (Lys-Gly) (interchain with G-Cter in SUMO2).

It belongs to the universal ribosomal protein uL5 family. Component of the large ribosomal subunit (LSU). Part of the 5S RNP complex, which is a LSU subcomplex composed of the 5S RNA, RPL5 and RPL11. Component of a hexameric 5S RNP precursor complex, composed of 5S RNA, RRS1, RPF2/BXDC1, RPL5, RPL11 and HEATR3; this complex acts as a precursor for ribosome assembly. Interacts with PML. Interacts with MDM2 (via its RanBP2-type zinc finger domain); negatively regulates MDM2-mediated TP53 ubiquitination and degradation. Interacts with NOP53; retains RPL11 into the nucleolus.

It localises to the nucleus. Its subcellular location is the nucleolus. The protein resides in the cytoplasm. Component of the ribosome, a large ribonucleoprotein complex responsible for the synthesis of proteins in the cell. The small ribosomal subunit (SSU) binds messenger RNAs (mRNAs) and translates the encoded message by selecting cognate aminoacyl-transfer RNA (tRNA) molecules. The large subunit (LSU) contains the ribosomal catalytic site termed the peptidyl transferase center (PTC), which catalyzes the formation of peptide bonds, thereby polymerizing the amino acids delivered by tRNAs into a polypeptide chain. The nascent polypeptides leave the ribosome through a tunnel in the LSU and interact with protein factors that function in enzymatic processing, targeting, and the membrane insertion of nascent chains at the exit of the ribosomal tunnel. As part of the 5S RNP/5S ribonucleoprotein particle it is an essential component of the LSU, required for its formation and the maturation of rRNAs. It also couples ribosome biogenesis to p53/TP53 activation. As part of the 5S RNP it accumulates in the nucleoplasm and inhibits MDM2, when ribosome biogenesis is perturbed, mediating the stabilization and the activation of TP53. Promotes nucleolar location of PML. The sequence is that of Large ribosomal subunit protein uL5 (RPL11) from Pongo abelii (Sumatran orangutan).